Consider the following 147-residue polypeptide: MSTYHPKSGDITRKWYVIDATDVVLGRLATHAADLLRGKGKPLYAPNVDCGDHVIVINADKVAVTSNKREREMRYRHSGYPGGLKSMTLGRSLDLHPERTIEDSIVGMMPHNKLTAASAKKLHVFSGSEHPYAAQKPEAYEIKKVAQ.

It belongs to the universal ribosomal protein uL13 family. As to quaternary structure, part of the 50S ribosomal subunit.

Functionally, this protein is one of the early assembly proteins of the 50S ribosomal subunit, although it is not seen to bind rRNA by itself. It is important during the early stages of 50S assembly. The sequence is that of Large ribosomal subunit protein uL13 from Corynebacterium glutamicum (strain R).